The chain runs to 439 residues: Microfibrillar-associated protein 1 (439 aa).

Residues 1 to 17 (MSVPSSLMKQPPIQSTA) are compositionally biased toward polar residues. The interval 1–200 (MSVPSSLMKQ…SEDEMEPRLK (200 aa)) is disordered. At Ser2 the chain carries N-acetylserine. Basic and acidic residues predominate over residues 23–34 (RNEKGEISMEKV). Phosphoserine occurs at positions 52 and 53. Basic and acidic residues predominate over residues 61–70 (QFIKKAKEQE). A Glycyl lysine isopeptide (Lys-Gly) (interchain with G-Cter in SUMO2) cross-link involves residue Lys67. Residues 71–81 (AEPEEQEEDSS) are compositionally biased toward acidic residues. Ser94, Ser116, Ser118, Ser132, and Ser133 each carry phosphoserine. Acidic residues-rich tracts occupy residues 112 to 122 (VVGESDSEVEG) and 131 to 144 (DSSEEEEEEIDEEE). The span at 145-163 (IERRRGMMRQRAQERKNEE) shows a compositional bias: basic and acidic residues. A compositionally biased stretch (acidic residues) spans 178-195 (ESESESEYEEYTDSEDEM). Lys249 is covalently cross-linked (Glycyl lysine isopeptide (Lys-Gly) (interchain with G-Cter in SUMO2)). Phosphothreonine is present on Thr267. Lys357 is covalently cross-linked (Glycyl lysine isopeptide (Lys-Gly) (interchain with G-Cter in SUMO2)). Ser361 bears the Phosphoserine mark. Residues Lys371, Lys381, Lys415, and Lys418 each participate in a glycyl lysine isopeptide (Lys-Gly) (interchain with G-Cter in SUMO2) cross-link. Residue Ser432 is modified to Phosphoserine.

It belongs to the MFAP1 family. As to quaternary structure, component of the spliceosome B complex. Interacts with PRPF38A (via N-terminal interaction domain).

The protein localises to the nucleus. Functionally, involved in pre-mRNA splicing as a component of the spliceosome. This is Microfibrillar-associated protein 1 from Bos taurus (Bovine).